We begin with the raw amino-acid sequence, 119 residues long: Flagellar transcriptional regulator FlhD (119 aa).

It belongs to the FlhD family. As to quaternary structure, homodimer; disulfide-linked. Forms a heterohexamer composed of two FlhC and four FlhD subunits. Each FlhC binds a FlhD dimer, forming a heterotrimer, and a hexamer assembles by dimerization of two heterotrimers.

It localises to the cytoplasm. Its function is as follows. Functions in complex with FlhC as a master transcriptional regulator that regulates transcription of several flagellar and non-flagellar operons by binding to their promoter region. Activates expression of class 2 flagellar genes, including fliA, which is a flagellum-specific sigma factor that turns on the class 3 genes. Also regulates genes whose products function in a variety of physiological pathways. In Enterobacter sp. (strain 638), this protein is Flagellar transcriptional regulator FlhD.